The primary structure comprises 348 residues: GMP reductase (348 aa).

An NADP(+)-binding site is contributed by 108-131; that stretch reads ADFQKTKDVMALSDELIFICIDIA. K(+) contacts are provided by Gly-181 and Gly-183. The active-site Thioimidate intermediate is Cys-186. 216 to 239 is a binding site for NADP(+); sequence IIGDGGCACAGDVAKAFGGGADFV.

This sequence belongs to the IMPDH/GMPR family. GuaC type 1 subfamily. As to quaternary structure, homotetramer.

It carries out the reaction IMP + NH4(+) + NADP(+) = GMP + NADPH + 2 H(+). Catalyzes the irreversible NADPH-dependent deamination of GMP to IMP. It functions in the conversion of nucleobase, nucleoside and nucleotide derivatives of G to A nucleotides, and in maintaining the intracellular balance of A and G nucleotides. The polypeptide is GMP reductase (Vibrio vulnificus (strain CMCP6)).